The chain runs to 353 residues: Histidinol-phosphate aminotransferase (353 aa).

The residue at position 211 (K211) is an N6-(pyridoxal phosphate)lysine.

Belongs to the class-II pyridoxal-phosphate-dependent aminotransferase family. Histidinol-phosphate aminotransferase subfamily. In terms of assembly, homodimer. Pyridoxal 5'-phosphate serves as cofactor.

The enzyme catalyses L-histidinol phosphate + 2-oxoglutarate = 3-(imidazol-4-yl)-2-oxopropyl phosphate + L-glutamate. The protein operates within amino-acid biosynthesis; L-histidine biosynthesis; L-histidine from 5-phospho-alpha-D-ribose 1-diphosphate: step 7/9. This Klebsiella pneumoniae (strain 342) protein is Histidinol-phosphate aminotransferase.